A 395-amino-acid chain; its full sequence is Multiple organellar RNA editing factor 8, chloroplastic/mitochondrial (395 aa).

The transit peptide at 1–56 (MATHTISRSILCRPAKSLSFLFTRSFASSAPLAKSPASSLLSRSRPLVAAFSSVFR) directs the protein to the chloroplast and mitochondrion. A compositionally biased stretch (basic and acidic residues) spans 211-236 (ANERNRRNDRPRNNDRSRNFERRREN). The interval 211 to 395 (ANERNRRNDR…RDGSGNPYQG (185 aa)) is disordered. The span at 240–300 (GPPPQRPPMG…GPRHPPPYGA (61 aa)) shows a compositional bias: pro residues. Residues 313 to 334 (QNYGGTPPPNYGGAPPANNMGG) show a composition bias toward low complexity. Over residues 335-355 (APPPNYGGGPPPQYGAVPPPQ) the composition is skewed to pro residues. The segment covering 356–385 (YGGAPPQNNNYQQQGSGMQQPQYQNNYPPN) has biased composition (low complexity).

This sequence belongs to the MORF family. Interacts with protoporphyrinogen oxidase 1 PPOX1. Interacts with PCMP-H52/MEF10. Homodimer and heterodimers with MORF1/RIP8, MORF2/RIP2, MORF3/RIP3, MORF4/RIP4, MORF5/RIP5, MORF6/RIP6 and MORF7/RIP7. Interacts with RBG3/ORRM3. Interacts with PCMP-A2/PMD1. Interacts with ORRM1 and VAT3/OZ1. Interacts with PCMP-H13/MEF35. Interacts with RBG5/ORRM4. Interacts with ORRM6.

It is found in the mitochondrion. It localises to the plastid. Its subcellular location is the chloroplast. Involved in organellar RNA editing. Required for the processing of numerous RNA editing sites in mitochondria and plastids. Binds to the plastid RARE1 factor, a pentatricopeptide repeat-containing protein involved in RNA editing. The sequence is that of Multiple organellar RNA editing factor 8, chloroplastic/mitochondrial from Arabidopsis thaliana (Mouse-ear cress).